Consider the following 325-residue polypeptide: Diacylglycerol acyltransferase/mycolyltransferase Ag85B (325 aa).

The N-terminal stretch at 1–40 (MTDVSGKIRAWGRRLLVGAAAAAALPGLVGLAGGAATAGA) is a signal peptide. Residue 82-83 (LR) participates in substrate binding. The fibronectin-binding stretch occupies residues 98–108 (FEWYYQSGLSV). Cysteine 127 and cysteine 132 are oxidised to a cystine. Substrate contacts are provided by serine 166 and aspartate 194. Residue serine 166 is the Nucleophile of the active site. The active site involves glutamate 270. Residues 272-275 (FVRS), lysine 279, and 302-304 (HSW) each bind substrate. Residue histidine 302 is part of the active site.

It belongs to the mycobacterial A85 antigen family.

The protein resides in the secreted. The enzyme catalyses 2 alpha,alpha'-trehalose 6-mycolate = alpha,alpha'-trehalose 6,6'-bismycolate + alpha,alpha-trehalose. It carries out the reaction an acyl-CoA + a 1,2-diacyl-sn-glycerol = a triacyl-sn-glycerol + CoA. Functionally, the antigen 85 proteins (FbpA, FbpB, FbpC) are responsible for the high affinity of mycobacteria for fibronectin, a large adhesive glycoprotein, which facilitates the attachment of M.tuberculosis to murine alveolar macrophages (AMs). They also help to maintain the integrity of the cell wall by catalyzing the transfer of mycolic acids to cell wall arabinogalactan and through the synthesis of alpha,alpha-trehalose dimycolate (TDM, cord factor). They catalyze the transfer of a mycoloyl residue from one molecule of alpha,alpha-trehalose monomycolate (TMM) to another TMM, leading to the formation of TDM. In Mycobacterium kansasii, this protein is Diacylglycerol acyltransferase/mycolyltransferase Ag85B (fbpB).